The sequence spans 741 residues: Hemolysin (741 aa).

The N-terminal stretch at 1–25 is a signal peptide; it reads MPKLNRCAIAIFTILSAISSPTLLA. The propeptide occupies 26–157; it reads NINEPSGEAA…RSGFASPAPA (132 aa). Disulfide bonds link C182/C200, C497/C511, and C537/C549. Positions 484–575 constitute a Ricin B-type lectin domain; the sequence is RPVNLQLASF…LTNVYSGESL (92 aa). The beta-prism domain stretch occupies residues 607–741; sequence NAQESSPILG…LVKGVQFDLN (135 aa).

Belongs to the HlyA hemolysin family. In terms of assembly, monomer. Homoheptamer. After binding to target membranes the protein assembles into a heptameric pre-pore complex. Proteolytic cleavage triggers a conformation change that is required for membrane insertion and pore formation. In terms of processing, proteolytical cleavage is required to convert the 80 kDa hemolysin precursor into the active 65 kDa hemolysin.

It is found in the secreted. It localises to the host cell membrane. Its function is as follows. Bacterial hemolysin that causes cytolysis by forming heptameric pores in target host membranes. This is Hemolysin (hlyA) from Vibrio cholerae serotype O1 (strain ATCC 39315 / El Tor Inaba N16961).